The sequence spans 479 residues: Proline--tRNA ligase (479 aa).

The protein belongs to the class-II aminoacyl-tRNA synthetase family. ProS type 3 subfamily. Homodimer.

The protein resides in the cytoplasm. The enzyme catalyses tRNA(Pro) + L-proline + ATP = L-prolyl-tRNA(Pro) + AMP + diphosphate. In terms of biological role, catalyzes the attachment of proline to tRNA(Pro) in a two-step reaction: proline is first activated by ATP to form Pro-AMP and then transferred to the acceptor end of tRNA(Pro). The protein is Proline--tRNA ligase of Lachnospira eligens (strain ATCC 27750 / DSM 3376 / VPI C15-48 / C15-B4) (Eubacterium eligens).